Here is a 159-residue protein sequence, read N- to C-terminus: MKIYTQRLDEIASDQTFETLELTFDTRQKSRFRATLTNGTDIGADLPRTGILRSGSFIATNEGDILRIDAKPEQLMQVTAKTDFELLKAAYHLGNRHVPLMLTPYALYFEPDHVLAEMVEGLGLQVKQVEHAFEPESGAYAQHNHDHRLSPIKSLHHVH.

Belongs to the UreE family.

It is found in the cytoplasm. Functionally, involved in urease metallocenter assembly. Binds nickel. Probably functions as a nickel donor during metallocenter assembly. The protein is Urease accessory protein UreE of Acinetobacter baylyi (strain ATCC 33305 / BD413 / ADP1).